Consider the following 367-residue polypeptide: MEEENISLPLSQDTFQDLWDNVSAPPISTIQTAALENEAWPAERQMNMMCNFMDSTFNEALFNLLPEPPSRDGANSSSPTVPVTTDYPGEYGFKLRFQKSGTAKSVTSTYSEILNKLYCQLAKTSLVEVLLGKDPPMGAVLRATAIYKKTEHVAEVVRRCPHHQNEDSAEHRSHLIRMEGSERAQYFEHPHTKRQSVTVPYEPPQLGSEFTTILLSFMCNSSCMGGMNRRPILTILTLETQEGIVLGRRCFEVRVCACPGRDRKTEETNSTKMQNDAKDAKKRKSVPTPDSTTIKKSKTASSAEEDNNEVYTLQIRGRKRYEMLKKINDGLDLLENKPKSKATHRPDGPIPPSGKRLLHRGEKSDSD.

The tract at residues 1 to 47 (MEEENISLPLSQDTFQDLWDNVSAPPISTIQTAALENEAWPAERQMN) is transcription activation (acidic). A DNA-binding region spans residues 86–273 (DYPGEYGFKL…KTEETNSTKM (188 aa)). Positions 160, 163, 219, and 223 each coordinate Zn(2+). Positions 254-261 (RVCACPGR) are interaction with DNA. Residues 262–279 (DRKTEETNSTKMQNDAKD) are compositionally biased toward basic and acidic residues. Disordered regions lie at residues 262-306 (DRKT…AEED) and 332-367 (DLLENKPKSKATHRPDGPIPPSGKRLLHRGEKSDSD). A Bipartite nuclear localization signal motif is present at residues 282 to 300 (KRKSVPTPDSTTIKKSKTA). Over residues 291 to 302 (STTIKKSKTASS) the composition is skewed to low complexity. Residues 308–337 (NEVYTLQIRGRKRYEMLKKINDGLDLLENK) form an oligomerization region. The short motif at 322–333 (EMLKKINDGLDL) is the Nuclear export signal element. Positions 342-363 (ATHRPDGPIPPSGKRLLHRGEK) are basic (repression of DNA-binding).

This sequence belongs to the p53 family. As to quaternary structure, binds DNA as a homotetramer. Requires Zn(2+) as cofactor.

It is found in the cytoplasm. Its subcellular location is the nucleus. Its function is as follows. Multifunctional transcription factor that induces cell cycle arrest, DNA repair or apoptosis upon binding to its target DNA sequence. Acts as a tumor suppressor in many tumor types; induces growth arrest or apoptosis depending on the physiological circumstances and cell type. Negatively regulates cell division by controlling expression of a set of genes required for this process. One of the activated genes is an inhibitor of cyclin-dependent kinases. Apoptosis induction seems to be mediated either by stimulation of BAX and FAS antigen expression, or by repression of Bcl-2 expression. The protein is Cellular tumor antigen p53 (tp53) of Tetraodon miurus (Congo puffer).